The sequence spans 499 residues: Hepatic triacylglycerol lipase (499 aa).

The first 22 residues, 1-22 (MDTSPLCFSILLVLCIFIQSSA), serve as a signal peptide directing secretion. Residues Asn42 and Asn78 are each glycosylated (N-linked (GlcNAc...) asparagine). Ser168 acts as the Nucleophile in catalysis. Asp194 (charge relay system) is an active-site residue. Residues 254 to 277 (CHFLELYRHIAQHGFNAITQTIKC) are essential for determining substrate specificity. His279 functions as the Charge relay system in the catalytic mechanism. The region spanning 352-486 (YHYQFKIQFI…RPTQEKIFVK (135 aa)) is the PLAT domain. N-linked (GlcNAc...) asparagine glycosylation is found at Asn362 and Asn397.

It belongs to the AB hydrolase superfamily. Lipase family. As to quaternary structure, homodimer.

It localises to the secreted. The catalysed reaction is a triacylglycerol + H2O = a diacylglycerol + a fatty acid + H(+). It catalyses the reaction a 1-acyl-sn-glycero-3-phosphocholine + H2O = sn-glycerol 3-phosphocholine + a fatty acid + H(+). The enzyme catalyses a 1,2-diacyl-sn-glycero-3-phosphocholine + H2O = a 2-acyl-sn-glycero-3-phosphocholine + a fatty acid + H(+). It carries out the reaction 1,2,3-tri-(9Z-octadecenoyl)-glycerol + H2O = di-(9Z)-octadecenoylglycerol + (9Z)-octadecenoate + H(+). The catalysed reaction is 1,2-di-(9Z-octadecenoyl)-sn-glycero-3-phosphocholine + H2O = (9Z-octadecenoyl)-sn-glycero-3-phosphocholine + (9Z)-octadecenoate + H(+). It catalyses the reaction 1,2,3-tributanoylglycerol + H2O = dibutanoylglycerol + butanoate + H(+). The enzyme catalyses 1,2-dihexadecanoyl-sn-glycero-3-phosphocholine + H2O = hexadecanoyl-sn-glycero-3-phosphocholine + hexadecanoate + H(+). It carries out the reaction 1,2-di-(9Z-octadecenoyl)-sn-glycerol + H2O = 2-(9Z-octadecenoyl)-glycerol + (9Z)-octadecenoate + H(+). The catalysed reaction is 1,2,3-tri-(9Z-octadecenoyl)-glycerol + H2O = 2,3-di-(9Z)-octadecenoyl-sn-glycerol + (9Z)-octadecenoate + H(+). It catalyses the reaction 1-(9Z-octadecenoyl)-sn-glycero-3-phospho-L-serine + H2O = sn-glycero-3-phospho-L-serine + (9Z)-octadecenoate + H(+). The enzyme catalyses 1-hexadecanoyl-sn-glycero-3-phosphocholine + H2O = sn-glycerol 3-phosphocholine + hexadecanoate + H(+). It carries out the reaction 1,3-di-(9Z-octadecenoyl)-glycerol + H2O = 3-(9Z-octadecenoyl)-sn-glycerol + (9Z)-octadecenoate + H(+). Phospholipase A1 and triacylglycerol lipase are inhibited by sphingomyelin. Its function is as follows. Catalyzes the hydrolysis of triglycerides and phospholipids present in circulating plasma lipoproteins, including chylomicrons, intermediate density lipoproteins (IDL), low density lipoproteins (LDL) of large size and high density lipoproteins (HDL), releasing free fatty acids (FFA) and smaller lipoprotein particles. Also exhibits lysophospholipase activity. Can hydrolyze both neutral lipid and phospholipid substrates but shows a greater binding affinity for neutral lipid substrates than phospholipid substrates. In native LDL, preferentially hydrolyzes the phosphatidylcholine species containing polyunsaturated fatty acids at sn-2 position. The protein is Hepatic triacylglycerol lipase (LIPC) of Homo sapiens (Human).